Consider the following 830-residue polypeptide: Vacuolar protein sorting-associated protein 11 homolog (830 aa).

Residues 733–775 (CDICREMLSMQSIYFLCQHSFHEECLNYKSTKRQEKFLCIICK) form an RING-type; atypical zinc finger.

Belongs to the VPS11 family. Part of the homotypic fusion and vacuole protein sorting (HOPS) complex, composed of Vps16A, car/Vps33A, dor/Vps18, Vps39, Vps11 and lt/Vps41. Unlike in other species, not part of the class C core vacuole/endosome tethering (CORVET) complex.

The protein resides in the late endosome membrane. It is found in the lysosome membrane. Functionally, part of the homotypic fusion and vacuole protein sorting (HOPS) tethering complex involved in endo-lysosomal vesicle trafficking and lysosome biogenesis, but unlike in many other species does not form part of the class C core vacuole/endosome tethering (CORVET) complex. The HOPS complex facilitates docking and fusion of lysosomes with late endosomes and several other types of vesicles. The HOPS complex is also involved in autophagy, pigment granule biogenesis and crinophagy (the elimination of unused secretory granules through fusion with lysosomes). The HOPS complex probably instigates autophagosome-lysosome fusion by binding autophagosome-associated Syx17/syntaxin 17 and promoting assembly of the trans-SNARE complex. Independent of Syx17/syntaxin 17, HOPS is involved in biosynthetic transport to lysosomes and lysosome-related organelles such as eye-pigment granules. Required for autophagocytosis-dependent remodeling of myofibrils and transverse-tubules (T-tubules) during metamorphosis. The chain is Vacuolar protein sorting-associated protein 11 homolog from Drosophila melanogaster (Fruit fly).